Consider the following 713-residue polypeptide: Peroxisomal biogenesis factor 8 (713 aa).

Positions 1-31 (MYRLGSQGRSIQSQLQNGDSSSGRPLQLQGT) are disordered. The span at 7 to 30 (QGRSIQSQLQNGDSSSGRPLQLQG) shows a compositional bias: polar residues. The short motif at 711–713 (AKL) is the Microbody targeting signal element.

In terms of assembly, interacts with PEX5 (via N-terminus).

Its subcellular location is the peroxisome membrane. Functionally, essential component of the machinery required for the import of both PTS1 and PTS2 (and perhaps all) peroxisomal matrix proteins. Binding of PEX8 to the N-terminus of PEX5 cargo receptor induces a conformational change of the TPR domains and decrease their binding affinity to cargo, facilitating the release of the PTS1 proteins within the peroxisome. The polypeptide is Peroxisomal biogenesis factor 8 (Komagataella phaffii (strain GS115 / ATCC 20864) (Yeast)).